The following is a 423-amino-acid chain: Flavohemoprotein B (423 aa).

The region spanning 1-136 is the Globin domain; it reads MLSQKSIQII…VAQAFMDAEE (136 aa). Heme b is bound at residue His-83. Residues Tyr-93 and Glu-135 each act as charge relay system in the active site. Residues 149 to 423 are reductase; it reads WKDTREFVVD…LRGVKNIIEN (275 aa). The FAD-binding FR-type domain occupies 150 to 268; that stretch reads KDTREFVVDR…SVPAGDFVVN (119 aa). FAD-binding positions include Tyr-188 and 212–215; that span reads RHYS. 281–286 serves as a coordination point for NADP(+); it reads GVGINP. FAD is bound at residue 400–403; sequence LFGP.

It belongs to the globin family. Two-domain flavohemoproteins subfamily. The protein in the C-terminal section; belongs to the flavoprotein pyridine nucleotide cytochrome reductase family. Requires FAD as cofactor. The cofactor is heme b.

It localises to the cytoplasm. It carries out the reaction 2 nitric oxide + NADPH + 2 O2 = 2 nitrate + NADP(+) + H(+). The enzyme catalyses 2 nitric oxide + NADH + 2 O2 = 2 nitrate + NAD(+) + H(+). In terms of biological role, is involved in NO detoxification in an aerobic process, termed nitric oxide dioxygenase (NOD) reaction that utilizes O(2) and NAD(P)H to convert NO to nitrate, which protects the cell from various noxious nitrogen compounds. Therefore, plays a central role in the inducible response to nitrosative stress. Its function is as follows. In the presence of oxygen and NADH, it has NADH oxidase activity, which leads to the generation of superoxide and H(2)O(2). Under anaerobic conditions, it also exhibits nitric oxide reductase and FAD reductase activities. However, all these reactions are much lower than NOD activity. This Dictyostelium discoideum (Social amoeba) protein is Flavohemoprotein B (fhbB).